The following is a 1335-amino-acid chain: Aldehyde oxidase 3 (1335 aa).

Residues 8-95 enclose the 2Fe-2S ferredoxin-type domain; that stretch reads DELIFFVNGK…GAAVTTVEGI (88 aa). [2Fe-2S] cluster-binding residues include C47, C52, C55, and C77. Position 116 (Q116) interacts with Mo-molybdopterin. Positions 117, 120, 152, and 154 each coordinate [2Fe-2S] cluster. Residues 236–421 form the FAD-binding PCMH-type domain; the sequence is FRGERTTWIA…ISVFVPRSSK (186 aa). An FAD-binding site is contributed by 264–271; it reads LVIGNTYL. At S320 the chain carries Phosphoserine. Residues S354, H358, D367, and L411 each contribute to the FAD site. Mo-molybdopterin-binding residues include A802, L1043, and Q1199. E1266 acts as the Proton acceptor; for azaheterocycle hydroxylase activity in catalysis.

This sequence belongs to the xanthine dehydrogenase family. As to quaternary structure, homodimer. Requires [2Fe-2S] cluster as cofactor. FAD serves as cofactor. The cofactor is Mo-molybdopterin. Highly expressed in liver (at protein level). In liver, the expression is greater in males than females.

It localises to the cytoplasm. The catalysed reaction is an aldehyde + O2 + H2O = a carboxylate + H2O2 + H(+). With respect to regulation, inhibited by potassium cyanide, menadione, benzamidine, raloxifene and norharmane. Oxidase with broad substrate specificity, oxidizing aromatic azaheterocycles, such as N1-methylnicotinamide and phthalazine, as well as aldehydes, such as benzaldehyde, retinal and pyridoxal. Plays a key role in the metabolism of xenobiotics and drugs containing aromatic azaheterocyclic substituents. Is probably involved in the regulation of reactive oxygen species homeostasis. May be a prominent source of superoxide generation via the one-electron reduction of molecular oxygen. May also catalyze nitric oxide (NO) production via the reduction of nitrite to NO with NADH or aldehyde as electron donor. The sequence is that of Aldehyde oxidase 3 (Aox3) from Mus musculus (Mouse).